The primary structure comprises 27 residues: AnmTX Sco 9a-1 (27 aa).

Pro-6 bears the Hydroxyproline mark. Disulfide bonds link Cys-7-Cys-18 and Cys-10-Cys-25.

Has analgesic and anti-inflammatory activity in vivo. At a dose of 0.1 and 1 mg/kg, exhibits anti-inflammatory activity by reducing the volume of edema during 24 h better than the nonsteroidal anti-inflammatory drug, Diclofenac, at dose of 1 mg/kg in a mouse model of acute local lambda-carrageenan-induced inflammation. At a dose of 1 mg/kg, reduces the content of tumor necrosis factor-alpha (TNF-alpha). Demonstrates a significant analgesic effect on acute pain sensitivity in the carrageenan-induced thermal hyperalgesia model at doses of 0.1 and 1 mg/kg. Not toxic in mice, however stimulates exploratory motivation and active search behavior, and demonstrates an anti-anxiety effect. Does not exhibit any effect on currents of rat acid-sensing ion channels ASIC1a or ASIC3. This chain is AnmTX Sco 9a-1, found in Stomphia coccinea (Spotted swimming anemone).